We begin with the raw amino-acid sequence, 353 residues long: UDP-N-acetylenolpyruvoylglucosamine reductase (353 aa).

Residues 31 to 201 (LASHAPAFVA…GSVRFALPRP (171 aa)) form the FAD-binding PCMH-type domain. Residue Arg-177 is part of the active site. Residue Ser-250 is the Proton donor of the active site. The active site involves Glu-346.

This sequence belongs to the MurB family. FAD serves as cofactor.

It localises to the cytoplasm. It carries out the reaction UDP-N-acetyl-alpha-D-muramate + NADP(+) = UDP-N-acetyl-3-O-(1-carboxyvinyl)-alpha-D-glucosamine + NADPH + H(+). The protein operates within cell wall biogenesis; peptidoglycan biosynthesis. Its function is as follows. Cell wall formation. The chain is UDP-N-acetylenolpyruvoylglucosamine reductase from Bordetella parapertussis (strain 12822 / ATCC BAA-587 / NCTC 13253).